The chain runs to 313 residues: Ribosomal protein L11 methyltransferase (313 aa).

4 residues coordinate S-adenosyl-L-methionine: Thr151, Gly172, Asp194, and Asn245.

Belongs to the methyltransferase superfamily. PrmA family.

It localises to the cytoplasm. It catalyses the reaction L-lysyl-[protein] + 3 S-adenosyl-L-methionine = N(6),N(6),N(6)-trimethyl-L-lysyl-[protein] + 3 S-adenosyl-L-homocysteine + 3 H(+). Its function is as follows. Methylates ribosomal protein L11. The protein is Ribosomal protein L11 methyltransferase of Nitrosomonas europaea (strain ATCC 19718 / CIP 103999 / KCTC 2705 / NBRC 14298).